A 98-amino-acid polypeptide reads, in one-letter code: Serine protease inhibitor Kazal-type 14 (98 aa).

The signal sequence occupies residues 1–23 (MVKYFQVLWSLLFSIMLHSMLLA). The 64-residue stretch at 35–98 (GLIKIKCPYK…QIRYYHTGRC (64 aa)) folds into the Kazal-like domain. 3 disulfide bridges follow: Cys-41–Cys-80, Cys-58–Cys-77, and Cys-66–Cys-98. Residue Asn-52 is glycosylated (N-linked (GlcNAc...) asparagine).

The protein localises to the secreted. Its function is as follows. May be a serine protease inhibitor. In Rattus norvegicus (Rat), this protein is Serine protease inhibitor Kazal-type 14 (Spink14).